The following is a 240-amino-acid chain: Uridylate kinase (240 aa).

An ATP-binding site is contributed by 9-12; that stretch reads KLSG. Glycine 51 provides a ligand contact to UMP. ATP contacts are provided by glycine 52 and arginine 56. Residues aspartate 71 and 132-139 contribute to the UMP site; that span reads TGNPFFTT. 3 residues coordinate ATP: threonine 159, tyrosine 165, and aspartate 168.

This sequence belongs to the UMP kinase family. Homohexamer.

It is found in the cytoplasm. It catalyses the reaction UMP + ATP = UDP + ADP. The protein operates within pyrimidine metabolism; CTP biosynthesis via de novo pathway; UDP from UMP (UMPK route): step 1/1. Its activity is regulated as follows. Inhibited by UTP. Its function is as follows. Catalyzes the reversible phosphorylation of UMP to UDP. This Synechococcus elongatus (strain ATCC 33912 / PCC 7942 / FACHB-805) (Anacystis nidulans R2) protein is Uridylate kinase.